The following is a 531-amino-acid chain: Pyruvate kinase (531 aa).

Residue R86 participates in substrate binding. K(+) contacts are provided by N88, S90, D121, and T122. Position 88 to 91 (N88 to H91) interacts with ATP. Positions 128 and 211 each coordinate ATP. E277 contacts Mg(2+). Substrate contacts are provided by G300, D301, and T333. D301 is a binding site for Mg(2+).

The protein belongs to the pyruvate kinase family. In terms of assembly, homotetramer. Mg(2+) serves as cofactor. The cofactor is K(+).

It catalyses the reaction pyruvate + ATP = phosphoenolpyruvate + ADP + H(+). Its pathway is carbohydrate degradation; glycolysis; pyruvate from D-glyceraldehyde 3-phosphate: step 5/5. The polypeptide is Pyruvate kinase (PYK) (Eimeria tenella (Coccidian parasite)).